We begin with the raw amino-acid sequence, 1367 residues long: Tonsoku-like protein (1367 aa).

TPR repeat units lie at residues 27–60 (AVCC…LESV), 67–100 (AVAH…AGSL), 107–147 (QRAW…VDEK), 162–195 (TRLY…AEQN), 202–235 (FRAR…ARAM), 242–275 (SECC…GSQK), 311–344 (MAIC…AELL), 352–385 (AVIH…RKGN), and 390–424 (AKTW…AQQA). The interval 460–509 (SMAKDTEEEEEEEEEEEEEASEALETSEMELSESEDDADGLSQQLEEEEE) is disordered. A compositionally biased stretch (acidic residues) spans 465–509 (TEEEEEEEEEEEEEASEALETSEMELSESEDDADGLSQQLEEEEE). ANK repeat units lie at residues 528–557 (MGET…PLNP), 561–590 (CGWT…AVDD), and 597–626 (DGIT…SVTL). Disordered stretches follow at residues 660 to 714 (MERR…EASP) and 726 to 785 (SAVC…TAIS). Polar residues predominate over residues 666-684 (MASSGQASHSSPALQTIPN). Pro residues predominate over residues 692–713 (TSPPSSPCPKPPSYTPRPPEAS). Residues 772-781 (KTPDPSKSRE) are compositionally biased toward basic and acidic residues. Arg-797 is subject to Omega-N-methylarginine. Disordered stretches follow at residues 798-820 (GVGS…EVPA) and 841-910 (TPLT…GPNK). Over residues 844 to 857 (TRSSSSSRPSTSIS) the composition is skewed to low complexity. Over residues 894-909 (AEPTENSSMPRTTGPN) the composition is skewed to polar residues. LRR repeat units follow at residues 1062–1086 (HTAL…LLAT), 1090–1118 (MPNL…SLGQ), 1121–1144 (FQNV…ALAS), 1181–1205 (AEHL…VLQS), 1240–1263 (GCAL…ELSR), 1268–1293 (CPSL…LLSA), and 1324–1347 (LSQL…TLCQ).

The protein belongs to the Tonsoku family. As to quaternary structure, component of the MMS22L-TONSL complex, a complex at least composed of MMS22L and TONSL/NFKBIL2. Interacts with the MCM complex, the FACT complex and the RPA complex. Interacts with MCM5; the interaction is direct. Binds histones, with a strong preference for histone H3.1 (histones H3.1 and H3-4/H3.1t). Interacts (via ANK repeats) with histone H4; specifically binds histone H4 lacking methylation at 'Lys-20' (H4K20me0). May interact with DNAJC9; the interaction seems to be histone-dependent.

It is found in the nucleus. Its subcellular location is the chromosome. The protein localises to the cytoplasm. In terms of biological role, component of the MMS22L-TONSL complex, a complex that promotes homologous recombination-mediated repair of double-strand breaks (DSBs) at stalled or collapsed replication forks. The MMS22L-TONSL complex is required to maintain genome integrity during DNA replication. It mediates the assembly of RAD51 filaments on single-stranded DNA (ssDNA): the MMS22L-TONSL complex is recruited to DSBs following histone replacement by histone chaperones and eviction of the replication protein A complex (RPA/RP-A) from DSBs. Following recruitment to DSBs, the TONSL-MMS22L complex promotes recruitment of RAD51 filaments and subsequent homologous recombination. Within the complex, TONSL acts as a histone reader, which recognizes and binds newly synthesized histones following their replacement by histone chaperones. Specifically binds histone H4 lacking methylation at 'Lys-20' (H4K20me0) and histone H3.1. This is Tonsoku-like protein from Rattus norvegicus (Rat).